The primary structure comprises 274 residues: uncharacterized protein (274 aa).

The segment at 235–274 (ETFDTQQDPKKTPETDKNAAYKGKEKKGKKEERGPRSIMK) is disordered. Residues 241-274 (QDPKKTPETDKNAAYKGKEKKGKKEERGPRSIMK) show a composition bias toward basic and acidic residues.

This is an uncharacterized protein from Treponema pallidum (strain Nichols).